The following is a 208-amino-acid chain: OVARIAN TUMOR DOMAIN-containing deubiquitinating enzyme 2 (208 aa).

One can recognise an OTU domain in the interval 5–127; sequence IVRRVIPSDN…GLHYDALALS (123 aa). D13 is an active-site residue. C16 functions as the Nucleophile in the catalytic mechanism. Catalysis depends on residues H120 and H201.

The protein belongs to the peptidase C85 family.

It carries out the reaction Thiol-dependent hydrolysis of ester, thioester, amide, peptide and isopeptide bonds formed by the C-terminal Gly of ubiquitin (a 76-residue protein attached to proteins as an intracellular targeting signal).. Its function is as follows. Hydrolase that can remove conjugated ubiquitin from proteins in vitro and may therefore play an important regulatory role at the level of protein turnover by preventing degradation. Cysteine protease with a preference for 'Lys-63' and 'Lys-48' -linked ubiquitin (UB) tetramers as substrates. This chain is OVARIAN TUMOR DOMAIN-containing deubiquitinating enzyme 2, found in Arabidopsis thaliana (Mouse-ear cress).